The sequence spans 432 residues: uncharacterized protein (432 aa).

Residues Met-1–Lys-18 are compositionally biased toward basic residues. Disordered regions lie at residues Met-1–Asn-23, Asn-37–Gly-56, and Ser-122–Leu-168. 3 stretches are compositionally biased toward low complexity: residues Asn-37 to Asn-53, Ser-122 to Gln-147, and Glu-154 to Leu-168. Positions Leu-181 to Ile-226 form a coiled coil. Disordered stretches follow at residues Val-270–Gly-290 and Ser-310–Arg-432. A compositionally biased stretch (low complexity) spans Ser-274–Ser-288. A compositionally biased stretch (polar residues) spans Ser-311–Asn-324. The span at Lys-352–Thr-378 shows a compositional bias: low complexity. The segment covering Ile-383–Ser-414 has biased composition (polar residues).

This is an uncharacterized protein from Dictyostelium discoideum (Social amoeba).